Here is a 315-residue protein sequence, read N- to C-terminus: Outer membrane protease OmpP (315 aa).

Residues 1–23 (MQTKLLAIMLAAPVVFSSQEASA) form the signal peptide. Catalysis depends on residues Asp-103, Asp-105, Asp-230, and His-232.

This sequence belongs to the peptidase A26 family.

It localises to the cell outer membrane. Functionally, protease; also acts as a receptor for bacteriophage Ox2. In Escherichia coli (strain K12), this protein is Outer membrane protease OmpP (ompP).